Consider the following 500-residue polypeptide: Protein shisa-6 (500 aa).

The first 25 residues, 1-25 (MALRRLLLLLLLSLESLDLLPSVHG), serve as a signal peptide directing secretion. Over 26 to 174 (ARGRAANRTL…NKYDPEKDKT (149 aa)) the chain is Extracellular. 2 N-linked (GlcNAc...) asparagine glycosylation sites follow: N32 and N59. The segment at 52 to 73 (ARGGRELNGTARAPGIPEAGSR) is disordered. The helical transmembrane segment at 175–195 (NFTVYITCGVIAFVIVAGVFA) threads the bilayer. Over 196–500 (KVSYDKAHRP…YTASKTEVTV (305 aa)) the chain is Cytoplasmic. Polar residues predominate over residues 240–255 (TSPKENTPVRSSSKNH). 2 disordered regions span residues 240–269 (TSPK…PEKP) and 349–378 (SQQK…DRGL). Phosphoserine occurs at positions 391, 397, and 409. Phosphothreonine is present on T433. Residues 444–470 (MHSHPSASNNSYATLGQSQTAAKRHAF) form a disordered region. A compositionally biased stretch (polar residues) spans 448-464 (PSASNNSYATLGQSQTA). Phosphothreonine is present on T477. The PDZ-binding motif lies at 497–500 (EVTV).

This sequence belongs to the shisa family. Component of the postsynaptic hippocampal AMPA-type glutamate receptor (AMPAR) complex, at least composed of pore forming AMPAR subunits GRIA1, GRIA2 and GRIA3 and AMPAR auxiliary proteins SHISA6 and SHISA7. Interacts (via PDZ-binding motif) with DLG4/PSD-95 (via PDZ domain); the interaction is direct. As to expression, expressed in the developing ventral mesencephalon.

The protein resides in the membrane. Its subcellular location is the postsynaptic density. In terms of biological role, involved in maintenance of high-frequency synaptic transmission at hippocampal CA3-CA1 synapses. Regulates AMPA-type glutamate receptor (AMPAR) immobilization at postsynaptic density keeping the channels in an activated state in the presence of glutamate and preventing synaptic depression. May play a role in self-renewal and differentiation of spermatogonial stem cells by inhibiting canonical Wnt signaling pathway. In Homo sapiens (Human), this protein is Protein shisa-6.